The following is a 434-amino-acid chain: Serine--tRNA ligase (434 aa).

241–243 (TAE) contacts L-serine. 272–274 (RSE) provides a ligand contact to ATP. Glu-295 provides a ligand contact to L-serine. An ATP-binding site is contributed by 359 to 362 (EISS). Residue Ser-395 participates in L-serine binding.

The protein belongs to the class-II aminoacyl-tRNA synthetase family. Type-1 seryl-tRNA synthetase subfamily. Homodimer. The tRNA molecule binds across the dimer.

It localises to the cytoplasm. The catalysed reaction is tRNA(Ser) + L-serine + ATP = L-seryl-tRNA(Ser) + AMP + diphosphate + H(+). It carries out the reaction tRNA(Sec) + L-serine + ATP = L-seryl-tRNA(Sec) + AMP + diphosphate + H(+). It participates in aminoacyl-tRNA biosynthesis; selenocysteinyl-tRNA(Sec) biosynthesis; L-seryl-tRNA(Sec) from L-serine and tRNA(Sec): step 1/1. Its function is as follows. Catalyzes the attachment of serine to tRNA(Ser). Is also able to aminoacylate tRNA(Sec) with serine, to form the misacylated tRNA L-seryl-tRNA(Sec), which will be further converted into selenocysteinyl-tRNA(Sec). In Glaesserella parasuis serovar 5 (strain SH0165) (Haemophilus parasuis), this protein is Serine--tRNA ligase.